Reading from the N-terminus, the 414-residue chain is Glucose-1-phosphate adenylyltransferase (414 aa).

Alpha-D-glucose 1-phosphate is bound by residues glycine 164, 181 to 182 (EK), and serine 199.

It belongs to the bacterial/plant glucose-1-phosphate adenylyltransferase family. Homotetramer.

It carries out the reaction alpha-D-glucose 1-phosphate + ATP + H(+) = ADP-alpha-D-glucose + diphosphate. The protein operates within glycan biosynthesis; glycogen biosynthesis. In terms of biological role, involved in the biosynthesis of ADP-glucose, a building block required for the elongation reactions to produce glycogen. Catalyzes the reaction between ATP and alpha-D-glucose 1-phosphate (G1P) to produce pyrophosphate and ADP-Glc. In Kocuria rhizophila (strain ATCC 9341 / DSM 348 / NBRC 103217 / DC2201), this protein is Glucose-1-phosphate adenylyltransferase.